The sequence spans 308 residues: Methionyl-tRNA formyltransferase (308 aa).

Residue 110-113 (SLLP) coordinates (6S)-5,6,7,8-tetrahydrofolate.

Belongs to the Fmt family.

It carries out the reaction L-methionyl-tRNA(fMet) + (6R)-10-formyltetrahydrofolate = N-formyl-L-methionyl-tRNA(fMet) + (6S)-5,6,7,8-tetrahydrofolate + H(+). In terms of biological role, attaches a formyl group to the free amino group of methionyl-tRNA(fMet). The formyl group appears to play a dual role in the initiator identity of N-formylmethionyl-tRNA by promoting its recognition by IF2 and preventing the misappropriation of this tRNA by the elongation apparatus. The polypeptide is Methionyl-tRNA formyltransferase (Neisseria gonorrhoeae (strain ATCC 700825 / FA 1090)).